We begin with the raw amino-acid sequence, 187 residues long: MIDRNGYRANVGIILLNSQNQVFWGKRARQDSWQFPQGGIKSGETPTEAMYRELAEETGLQPVHVEILGRTREWLRYDVPACWTRRDWRKNYRGQKQIWFLLRLLGRDSDVSLETCAHPEFDAWRWNQYWVELESVVEFKRQVYRQALTELSRLLDHEAGLGNDRAYREPLEPVEKNRKKSSDTRQS.

The region spanning glycine 6–threonine 149 is the Nudix hydrolase domain. The Nudix box signature appears at glycine 38–glycine 59. The segment at alanine 166–serine 187 is disordered.

It belongs to the Nudix hydrolase family. RppH subfamily. A divalent metal cation serves as cofactor.

Its function is as follows. Accelerates the degradation of transcripts by removing pyrophosphate from the 5'-end of triphosphorylated RNA, leading to a more labile monophosphorylated state that can stimulate subsequent ribonuclease cleavage. The polypeptide is RNA pyrophosphohydrolase (Nitrosomonas europaea (strain ATCC 19718 / CIP 103999 / KCTC 2705 / NBRC 14298)).